We begin with the raw amino-acid sequence, 106 residues long: Ribosomal protein eL42-like (106 aa).

A disordered region spans residues 26-53 (YKKGKDSLYAQGRRRYDRKQSGYGGQTK). Position 53 is an N6-methyllysine (K53).

It belongs to the eukaryotic ribosomal protein eL42 family. In terms of tissue distribution, ubiquitously expressed.

It is found in the cytoplasm. This chain is Ribosomal protein eL42-like (RPL36AL), found in Homo sapiens (Human).